The sequence spans 90 residues: Large ribosomal subunit protein bL31B (90 aa).

Belongs to the bacterial ribosomal protein bL31 family. Type B subfamily. As to quaternary structure, part of the 50S ribosomal subunit.

This Pseudomonas fluorescens (strain SBW25) protein is Large ribosomal subunit protein bL31B.